A 377-amino-acid chain; its full sequence is Succinyl-diaminopimelate desuccinylase (377 aa).

A Zn(2+)-binding site is contributed by H66. D68 is an active-site residue. D99 is a binding site for Zn(2+). The active-site Proton acceptor is E133. Zn(2+) contacts are provided by E134, E163, and H349.

This sequence belongs to the peptidase M20A family. DapE subfamily. Homodimer. Zn(2+) serves as cofactor. Requires Co(2+) as cofactor.

The enzyme catalyses N-succinyl-(2S,6S)-2,6-diaminopimelate + H2O = (2S,6S)-2,6-diaminopimelate + succinate. Its pathway is amino-acid biosynthesis; L-lysine biosynthesis via DAP pathway; LL-2,6-diaminopimelate from (S)-tetrahydrodipicolinate (succinylase route): step 3/3. In terms of biological role, catalyzes the hydrolysis of N-succinyl-L,L-diaminopimelic acid (SDAP), forming succinate and LL-2,6-diaminopimelate (DAP), an intermediate involved in the bacterial biosynthesis of lysine and meso-diaminopimelic acid, an essential component of bacterial cell walls. In Legionella pneumophila (strain Lens), this protein is Succinyl-diaminopimelate desuccinylase.